The chain runs to 62 residues: uncharacterized protein (62 aa).

The signal sequence occupies residues 1–19 (MKLIILLFVVAAFVTLAMG).

This is an uncharacterized protein from Lepidoptera (butterflies and moths).